Reading from the N-terminus, the 686-residue chain is Methionine--tRNA ligase (686 aa).

The 'HIGH' region motif lies at 15 to 25 (PYANGSIHLGH). Zn(2+) contacts are provided by cysteine 146, cysteine 149, cysteine 159, and cysteine 162. A 'KMSKS' region motif is present at residues 332–336 (KMSKS). Lysine 335 lines the ATP pocket. Residues 585–686 (AFEAVDMRIA…EGAQPGMRVM (102 aa)) enclose the tRNA-binding domain.

This sequence belongs to the class-I aminoacyl-tRNA synthetase family. MetG type 1 subfamily. In terms of assembly, homodimer. It depends on Zn(2+) as a cofactor.

The protein localises to the cytoplasm. The enzyme catalyses tRNA(Met) + L-methionine + ATP = L-methionyl-tRNA(Met) + AMP + diphosphate. In terms of biological role, is required not only for elongation of protein synthesis but also for the initiation of all mRNA translation through initiator tRNA(fMet) aminoacylation. The protein is Methionine--tRNA ligase of Aliivibrio salmonicida (strain LFI1238) (Vibrio salmonicida (strain LFI1238)).